Consider the following 215-residue polypeptide: Orotate phosphoribosyltransferase (215 aa).

A 5-phospho-alpha-D-ribose 1-diphosphate-binding site is contributed by Lys-26. 34-35 (FF) lines the orotate pocket. 5-phospho-alpha-D-ribose 1-diphosphate is bound by residues 72–73 (YK), Arg-99, Lys-100, Lys-103, His-105, and 124–132 (DDVITAGTA). Residues Thr-128 and Arg-156 each contribute to the orotate site.

It belongs to the purine/pyrimidine phosphoribosyltransferase family. PyrE subfamily. In terms of assembly, homodimer. It depends on Mg(2+) as a cofactor.

The enzyme catalyses orotidine 5'-phosphate + diphosphate = orotate + 5-phospho-alpha-D-ribose 1-diphosphate. Its pathway is pyrimidine metabolism; UMP biosynthesis via de novo pathway; UMP from orotate: step 1/2. Catalyzes the transfer of a ribosyl phosphate group from 5-phosphoribose 1-diphosphate to orotate, leading to the formation of orotidine monophosphate (OMP). This chain is Orotate phosphoribosyltransferase, found in Yersinia pseudotuberculosis serotype O:1b (strain IP 31758).